The following is a 373-amino-acid chain: Spermidine/putrescine import ATP-binding protein PotA (373 aa).

The 231-residue stretch at 5–235 (IVFEHVSKKF…PKSSFVADFI (231 aa)) folds into the ABC transporter domain. Position 37–44 (37–44 (GPSGCGKT)) interacts with ATP.

This sequence belongs to the ABC transporter superfamily. Spermidine/putrescine importer (TC 3.A.1.11.1) family. As to quaternary structure, the complex is composed of two ATP-binding proteins (PotA), two transmembrane proteins (PotB and PotC) and a solute-binding protein (PotD).

It localises to the cell inner membrane. The catalysed reaction is ATP + H2O + polyamine-[polyamine-binding protein]Side 1 = ADP + phosphate + polyamineSide 2 + [polyamine-binding protein]Side 1.. Its function is as follows. Part of the ABC transporter complex PotABCD involved in spermidine/putrescine import. Responsible for energy coupling to the transport system. The polypeptide is Spermidine/putrescine import ATP-binding protein PotA (Protochlamydia amoebophila (strain UWE25)).